A 7182-amino-acid chain; its full sequence is Replicase polyprotein 1ab (7182 aa).

Residues 54–174 (YDNHVKIDCR…HKWFQFCRLY (121 aa)) enclose the CoV Nsp1 globular domain. The 31-residue stretch at 192–222 (FSVEDAYAEVHAEPKGKYSQKAYALLRQYRG) folds into the BetaCoV Nsp1 C-terminal domain. The CoV Nsp2 N-terminal domain occupies 226-488 (VLFVDQYGCD…LITHALYLDY (263 aa)). Residues Cys365, Cys370, Cys386, and Cys389 each contribute to the Zn(2+) site. Residues 365 to 389 (CFNDNCDFYGWVSGNMMDGFSCPLC) are C4. Residues 493-681 (CGNLEQNHIL…VNKFYTFFKL (189 aa)) form the CoV Nsp2 middle domain. The 113-residue stretch at 697–809 (LKTINGLVCI…LDQAWRFPCA (113 aa)) folds into the CoV Nsp2 C-terminal domain. In terms of domain architecture, Ubiquitin-like 1 spans 811-923 (RKVNFNEKPV…MYCTFAIEDV (113 aa)). 14 consecutive repeat copies span residues 945–954 (NDDEDVVTGD), 955–964 (NDDEDVVTGD), 965–974 (NDDEDVVTGD), 975–984 (NDDEDVVTGD), 985–994 (NDDEDVVTGD), 995–1004 (NDDEDVVTGD), 1005–1014 (NDDEDVVTGD), 1015–1024 (NDDEDVVTGD), 1025–1034 (NDDEDVVTGD), 1035–1044 (NDDEDVVTGD), 1045–1054 (NDDEDVVTGD), 1055–1064 (NDDEDVVTGD), 1065–1074 (NDDEDVVTGD), and 1075–1084 (NDDEDVVTGD). A 14 X 10 AA tandem repeat of N-[DN]-D-E-D-V-V-T-G-D region spans residues 945–1084 (NDDEDVVTGD…NDDEDVVTGD (140 aa)). The interval 946–1064 (DDEDVVTGDN…NDDEDVVTGD (119 aa)) is disordered. The region spanning 1123–1373 (VFNDVYNDAL…VCFVKGDIIN (251 aa)) is the Peptidase C16 1 domain. Catalysis depends on Cys1161, which acts as the For PL1-PRO activity. Zn(2+) is bound by residues Cys1238, Cys1241, Cys1264, and Cys1266. A C4-type 1 zinc finger spans residues 1238 to 1266 (CLKCGFSFDLNGLDALFFYGDIVSHVCKC). Catalysis depends on for PL1-PRO activity residues His1312 and Asp1323. Residues 1351–1522 (ELPQLYGLCI…IIQKCQITSV (172 aa)) enclose the Macro domain. One can recognise a DPUP domain in the interval 1578–1649 (NDVRDYLLSK…TVNQVCVLLA (72 aa)). Residues 1649-1704 (AKKIDVLLTVDGVNFKSISLTVGEVFGKILGNVFCDGIDVTKLKCSDFYADKILYQ) enclose the Ubiquitin-like 2 domain. Residues 1718–1978 (SSFGFDQQQL…MVAYNPDLSQ (261 aa)) form the Peptidase C16 2 domain. Cys1757 acts as the For PL2-PRO activity in catalysis. Positions 1835, 1837, 1869, and 1871 each coordinate Zn(2+). Residues 1835-1871 (CDCGIKQESRVGVDAVMHFGTLAKTDLFNGYKIGCNC) form a C4-type 2 zinc finger. Catalysis depends on for PL2-PRO activity residues His1914 and Asp1928. The 102-residue stretch at 1992–2093 (IKAQFKPFAK…TYFNKPSFKS (102 aa)) folds into the Nucleic acid-binding domain. Residues 2108–2257 (ESQGNVVTSV…NDKTIFYTTE (150 aa)) form the G2M domain. 3 consecutive transmembrane segments (helical) span residues 2226-2246 (AIEF…LLHF), 2287-2307 (FLVV…NVIF), and 2318-2338 (FPIF…LVTI). The segment at 2226-2463 (AIEFYGFLKW…FVLLRFYIVV (238 aa)) is HD1. Residues 2323-2384 (GRIVMWIKAT…AIDFVQYEVD (62 aa)) enclose the 3Ecto domain. Cystine bridges form between Cys2339/Cys2363 and Cys2354/Cys2360. The next 2 membrane-spanning stretches (helical) occupy residues 2401-2421 (LVIG…LIGL) and 2443-2463 (FIVF…YIVV). A Y1 region spans residues 2471–2561 (GFIRHIVYGC…ELKRPVNPTD (91 aa)). Residues 2471 to 2838 (GFIRHIVYGC…LTTPFSLKGG (368 aa)) enclose the CoV Nsp3 Y domain. Zn(2+)-binding residues include His2475, Cys2480, Cys2485, Cys2488, Cys2521, His2524, Cys2528, and Cys2531. The tract at residues 2475–2488 (HIVYGCNKAGCLFC) is ZF1. Residues 2521-2531 (CVKHQWNCFNC) are ZF2. Residues 2562–2654 (ASHYVVTDIK…LVDKKLITTA (93 aa)) form a Y2 region. The coV-Y stretch occupies residues 2562–2838 (ASHYVVTDIK…LTTPFSLKGG (277 aa)). Positions 2655–2737 (CNGISVTQTM…KSMISAVAAG (83 aa)) are Y3. The tract at residues 2738 to 2838 (LEFTDENYNN…LTTPFSLKGG (101 aa)) is Y4. A run of 5 helical transmembrane segments spans residues 2844 to 2864 (LLYI…ALLP), 3119 to 3139 (ASSI…YYLI), 3151 to 3171 (VVVI…VFQV), 3178 to 3198 (VYAC…SVIM), and 3203 to 3223 (IVMY…AMVI). Residues 2844 to 3223 (LLYILFFVSL…FCVTYVAMVI (380 aa)) are HD2. One can recognise a Nsp4C domain in the interval 3237-3334 (IGVNVCSDST…TASVSTSFLQ (98 aa)). One can recognise a Peptidase C30 domain in the interval 3335–3637 (SGIVKMVSPT…YQQLAGVKLQ (303 aa)). Active-site for 3CL-PRO activity residues include His3375 and Cys3479. The next 7 membrane-spanning stretches (helical) occupy residues 3651 to 3671 (ILIS…WTIF), 3676 to 3696 (THMI…MLLV), 3701 to 3721 (FYLT…NYLV), 3744 to 3764 (FTYV…IFIT), 3772 to 3792 (IFSL…WYFG), 3800 to 3820 (LLFI…SLAI), and 3843 to 3863 (LILL…GFFS). The segment at 3651–3863 (ILISTFLFSC…ILSCYWGFFS (213 aa)) is HD3. One can recognise a RdRp Nsp7 cofactor domain in the interval 3925-4013 (SKLTDVKCAN…DYVQDSTVLQ (89 aa)). Residues 4014–4210 (ALQSEFVNMA…YNEVANAVMQ (197 aa)) form the RdRp Nsp8 cofactor domain. The 110-residue stretch at 4211-4320 (NNELMPHKLK…GTLSSTIRLQ (110 aa)) folds into the Nsp9 ssRNA-binding domain. In terms of domain architecture, ExoN/MTase coactivator spans 4321 to 4458 (AGVATEYAAN…CVGSSVAVQS (138 aa)). Zn(2+) contacts are provided by Cys4394, Cys4397, His4403, Cys4410, Cys4436, Cys4439, Cys4447, and Cys4449. Zinc fingers lie at residues 4394–4410 (CIYC…DGIC) and 4436–4449 (CQVC…SCSC). The NiRAN domain maps to 4463 to 4718 (FLNRVRGTSV…DCELFVNDSY (256 aa)). Mn(2+) contacts are provided by Asn4666 and Asp4675. The region spanning 4719–4817 (RQFDLVQYDF…MNLDVDTHRY (99 aa)) is the Nsp12 Interface domain. Residues His4748, Cys4754, Cys4759, Cys4763, and Cys4940 each coordinate Zn(2+). The Nsp12 RNA-dependent RNA polymerase domain maps to 4818-5385 (RLSLKDLLLY…NMYLKSAVMQ (568 aa)). A rdRp Fingers N-ter region spans residues 4820–5034 (SLKDLLLYAA…HQKCLKSIAA (215 aa)). Residues 5035–5073 (TRGVPVVIGTTKFYGGWDDMLRHLIKDVDNPVLMGWDYP) are rdRp Palm N-ter. The region spanning 5065 to 5227 (PVLMGWDYPK…CYNSDYASKG (163 aa)) is the RdRp catalytic domain. Residues 5074–5132 (KCDRAMPNILRIVSSLVLARKHEFCCSHGDRFYRLANECAQVLSEIVMCGGCYYVKPGG) form a rdRp Fingers C-ter region. Zn(2+) contacts are provided by His5095, Cys5098, and Cys5099. The rdRp Palm C-ter stretch occupies residues 5133 to 5268 (TSSGDATTAF…TNGPHEFCSQ (136 aa)). Active-site residues include Ser5212, Asp5213, and Asp5214. Residues 5269 to 5385 (HTMLVKIDGD…NMYLKSAVMQ (117 aa)) are rdRp Thumb. A CV ZBD domain is found at 5386–5498 (SVGACVVCSS…DDFNKIASCK (113 aa)). Residues Cys5390, Cys5393, Cys5401, Cys5404, Cys5411, Cys5414, His5418, His5424, Cys5435, Cys5440, Cys5457, and His5460 each coordinate Zn(2+). One can recognise a (+)RNA virus helicase ATP-binding domain in the interval 5641–5822 (SVPLVFQNNV…MCCLGPDIFL (182 aa)). 5666-5673 (GPPGTGKS) provides a ligand contact to ATP. The (+)RNA virus helicase C-terminal domain maps to 5823–5992 (GNCYRCPKEI…TLPRLHCTTN (170 aa)). Positions 6059-6274 (LFITKDEAIK…RCLAIYDCFC (216 aa)) constitute an ExoN domain. Catalysis depends on residues Asp6077, Glu6079, and Glu6178. Zn(2+)-binding residues include Cys6194, Cys6197, Cys6213, His6216, His6244, Cys6248, and His6251. Catalysis depends on residues His6255 and Asp6260. Cys6266 contributes to the Zn(2+) binding site. In terms of domain architecture, N7-MTase spans 6283–6509 (YPIISNEVSI…NLWNTFTTLQ (227 aa)). 6318 to 6324 (DIGNPKG) contributes to the S-adenosyl-L-methionine binding site. Residues 6396–6410 (CNGGSLYVNKHAFHT) form a gpppA-binding region. Cys6434, Cys6455, Cys6466, and His6469 together coordinate Zn(2+). The Nsp15 N-terminal oligomerization domain maps to 6510–6570 (SLENVIYNLV…NIAVELFTKR (61 aa)). The 121-residue stretch at 6571-6691 (SIRHHPELKI…FAMRKDGDDV (121 aa)) folds into the AV-Nsp11N/CoV-Nsp15M domain. In terms of domain architecture, NendoU spans 6741 to 6880 (EPRSDLERDF…NDNKIMTFYP (140 aa)). Catalysis depends on residues His6771, His6786, Lys6826, Lys6929, Asp7013, Lys7053, and Glu7086. The 295-residue stretch at 6885-7179 (TNDWKPGYSM…KEIFVGDSLV (295 aa)) folds into the Nidovirus-type SAM-dependent 2'-O-MTase domain.

This sequence belongs to the coronaviruses polyprotein 1ab family. In terms of assembly, interacts with host PHB and PHB2. As to quaternary structure, interacts with papain-like protease nsp3 and non-structural protein 6. Monomer. Homodimer. Only the homodimer shows catalytic activity. In terms of assembly, interacts with nsp8 and nsp12 to form the replication-transcription complex (RTC): nsp12, nsp7, two subunits of nsp8, and up to two subunits of nsp13. As to quaternary structure, interacts with nsp7, nsp13 and nsp12 to form the replication-transcription complex (RTC): nsp12, nsp7, two subunits of nsp8, and up to two subunits of nsp13. Interacts with nsp12. In terms of assembly, interacts with proofreading exoribonuclease nsp14 and 2'-O-methyltransferase nsp16; these interactions enhance nsp14 and nsp16 enzymatic activities. As to quaternary structure, interacts with nsp7 and nsp8 to form the replication-transcription complex (RTC): nsp12, nsp7, two subunits of nsp8, and up to two subunits of nsp13. Interacts with nsp9. Interacts with nsp8 to form the replication-transcription complex (RTC): nsp12, nsp7, two subunits of nsp8, and up to two subunits of nsp13. Requires Mn(2+) as cofactor. Mg(2+) is required as a cofactor. In terms of processing, specific enzymatic cleavages in vivo by its own proteases yield mature proteins. 3CL-PRO and PL-PRO proteinases are autocatalytically processed.

It is found in the host membrane. The protein localises to the host cytoplasm. It localises to the host perinuclear region. The protein resides in the host endoplasmic reticulum-Golgi intermediate compartment. It carries out the reaction RNA(n) + a ribonucleoside 5'-triphosphate = RNA(n+1) + diphosphate. The catalysed reaction is ATP + H2O = ADP + phosphate + H(+). It catalyses the reaction Thiol-dependent hydrolysis of ester, thioester, amide, peptide and isopeptide bonds formed by the C-terminal Gly of ubiquitin (a 76-residue protein attached to proteins as an intracellular targeting signal).. The enzyme catalyses a 5'-end (N(7)-methyl 5'-triphosphoguanosine)-ribonucleoside in mRNA + S-adenosyl-L-methionine = a 5'-end (N(7)-methyl 5'-triphosphoguanosine)-(2'-O-methyl-ribonucleoside) in mRNA + S-adenosyl-L-homocysteine + H(+). It carries out the reaction uridylyl-uridylyl-ribonucleotide-RNA = a 3'-end uridylyl-2',3'-cyclophospho-uridine-RNA + a 5'-end dephospho-ribonucleoside-RNA. The catalysed reaction is a 5'-end diphospho-ribonucleoside in mRNA + GTP + H(+) = a 5'-end (5'-triphosphoguanosine)-ribonucleoside in mRNA + diphosphate. It catalyses the reaction a 5'-end (5'-triphosphoguanosine)-ribonucleoside in mRNA + S-adenosyl-L-methionine = a 5'-end (N(7)-methyl 5'-triphosphoguanosine)-ribonucleoside in mRNA + S-adenosyl-L-homocysteine. Functionally, the replicase polyprotein of coronaviruses is a multifunctional protein: it contains the activities necessary for the transcription of negative stranded RNA, leader RNA, subgenomic mRNAs and progeny virion RNA as well as proteinases responsible for the cleavage of the polyprotein into functional products. In terms of biological role, inhibits host translation by interacting with the 40S ribosomal subunit. The nsp1-40S ribosome complex further induces an endonucleolytic cleavage near the 5'UTR of host mRNAs, targeting them for degradation. Viral mRNAs are not susceptible to nsp1-mediated endonucleolytic RNA cleavage thanks to the presence of a 5'-end leader sequence and are therefore protected from degradation. By suppressing host gene expression, nsp1 facilitates efficient viral gene expression in infected cells and evasion from host immune response. Its function is as follows. May play a role in the modulation of host cell survival signaling pathway by interacting with host PHB and PHB2. Indeed, these two proteins play a role in maintaining the functional integrity of the mitochondria and protecting cells from various stresses. Responsible for the cleavages located at the N-terminus of the replicase polyprotein. In addition, PL-PRO possesses a deubiquitinating/deISGylating activity and processes both 'Lys-48'- and 'Lys-63'-linked polyubiquitin chains from cellular substrates. Participates together with nsp4 in the assembly of virally-induced cytoplasmic double-membrane vesicles necessary for viral replication. Antagonizes innate immune induction of type I interferon by blocking the phosphorylation, dimerization and subsequent nuclear translocation of host IRF3. Also prevents host NF-kappa-B signaling. Functionally, participates in the assembly of virally-induced cytoplasmic double-membrane vesicles necessary for viral replication. In terms of biological role, cleaves the C-terminus of replicase polyprotein at 11 sites. Recognizes substrates containing the core sequence [ILMVF]-Q-|-[SGACN]. Also able to bind an ADP-ribose-1''-phosphate (ADRP). Its function is as follows. Plays a role in the initial induction of autophagosomes from host endoplasmic reticulum. Later, limits the expansion of these phagosomes that are no longer able to deliver viral components to lysosomes. Forms a hexadecamer with nsp8 (8 subunits of each) that may participate in viral replication by acting as a primase. Alternatively, may synthesize substantially longer products than oligonucleotide primers. Functionally, forms a hexadecamer with nsp7 (8 subunits of each) that may participate in viral replication by acting as a primase. Alternatively, may synthesize substantially longer products than oligonucleotide primers. In terms of biological role, forms a primer, NSP9-pU, which is utilized by the polymerase for the initiation of RNA chains. Interacts with ribosome signal recognition particle RNA (SRP). Together with NSP8, suppress protein integration into the cell membrane, thereby disrupting host immune defenses. Its function is as follows. Plays a pivotal role in viral transcription by stimulating both nsp14 3'-5' exoribonuclease and nsp16 2'-O-methyltransferase activities. Therefore plays an essential role in viral mRNAs cap methylation. RNA-directed RNA polymerase that catalyzes the transcription of viral genomic and subgenomic RNAs. Acts in complex with nsp7 and nsp8 to transcribe both the minus and positive strands of genomic RNA. The kinase-like NiRAN domain of NSP12 attaches one or more nucleotides to the amino terminus of NSP9, forming a covalent RNA-protein intermediate that serves as transcription/replication primer. Subgenomic RNAs (sgRNAs) are formed by discontinuous transcription: The polymerase has the ability to pause at transcription-regulating sequences (TRS) and jump to the leader TRS, resulting in a major deletion. This creates a series of subgenomic RNAs that are replicated, transcribed and translated. In addition, Nsp12 is a subunit of the viral RNA capping enzyme that catalyzes the RNA guanylyltransferase reaction for genomic and sub-genomic RNAs. Subsequently, the NiRAN domain transfers RNA to GDP, and forms the core cap structure GpppA-RNA. Functionally, multi-functional protein with a zinc-binding domain in N-terminus displaying RNA and DNA duplex-unwinding activities with 5' to 3' polarity. Activity of helicase is dependent on magnesium. In terms of biological role, plays a role in viral RNA synthesis through two distinct activities. The N7-guanine methyltransferase activity plays a role in the formation of the cap structure GpppA-RNA. The proofreading exoribonuclease reduces the sensitivity of the virus to RNA mutagens during replication. This activity acts on both ssRNA and dsRNA in a 3'-5' direction. Its function is as follows. Plays a role in viral transcription/replication and prevents the simultaneous activation of host cell dsRNA sensors, such as MDA5/IFIH1, OAS, and PKR. Acts by degrading the 5'-polyuridines generated during replication of the poly(A) region of viral genomic and subgenomic RNAs. Catalyzes a two-step reaction in which a 2'3'-cyclic phosphate (2'3'-cP) is first generated by 2'-O transesterification, which is then hydrolyzed to a 3'-phosphate (3'-P). If not degraded, poly(U) RNA would hybridize with poly(A) RNA tails and activate host dsRNA sensors. Methyltransferase that mediates mRNA cap 2'-O-ribose methylation to the 5'-cap structure of viral mRNAs. N7-methyl guanosine cap is a prerequisite for binding of nsp16. Therefore plays an essential role in viral mRNAs cap methylation which is essential to evade immune system. The polypeptide is Replicase polyprotein 1ab (rep) (Human coronavirus HKU1 (isolate N1) (HCoV-HKU1)).